The following is a 456-amino-acid chain: Aminotransferase ALD1, chloroplastic (456 aa).

A chloroplast-targeting transit peptide spans 1 to 43; the sequence is MVSLMFFSSASPLCSSPSKIPKASLDFEMKKLGGSTKLVRNVN. Residues tyrosine 108, 142-143, asparagine 223, aspartate 251, tyrosine 254, serine 281, serine 283, arginine 292, and asparagine 323 each bind pyridoxal 5'-phosphate; that span reads AQ.

The protein belongs to the class-I pyridoxal-phosphate-dependent aminotransferase family. LL-diaminopimelate aminotransferase subfamily. Pyridoxal 5'-phosphate is required as a cofactor. As to expression, highly expressed in senescing leaves, flowers, siliques and seeds.

It localises to the plastid. It is found in the chloroplast. In terms of biological role, aminotransferase involved in local and systemic acquired resistance (SAR) to the bacterial pathogen P.syringae. Required for salicylic acid (SA) and camalexin accumulation upon pathogen infection. Possesses aminotransferase activity in vitro and may generate amino-acid-derived defense signals in vivo. May be involved in ethylene-induced senescence signaling. Involved in the biosynthesis of pipecolate (Pip), a metabolite that orchestrates defense amplification, positive regulation of SA biosynthesis, and priming to guarantee effective local resistance induction and the establishment of SAR. Converts lysine to alpha-keto-epsilon-aminocaproate, which then can spontaneously cyclize to form delta-(1)-piperideine-2-carboxylate (P2C). P2C is converted to Pip by SARD4. May produce non-Pip metabolites that play roles in immunity. Involved in the synthesis of distinct metabolite signals that affect basal and early defenses, and later defense responses. This is Aminotransferase ALD1, chloroplastic from Arabidopsis thaliana (Mouse-ear cress).